The primary structure comprises 327 residues: Phosphate acyltransferase (327 aa).

The protein belongs to the PlsX family. Homodimer. Probably interacts with PlsY.

The protein resides in the cytoplasm. The enzyme catalyses a fatty acyl-[ACP] + phosphate = an acyl phosphate + holo-[ACP]. It functions in the pathway lipid metabolism; phospholipid metabolism. Its function is as follows. Catalyzes the reversible formation of acyl-phosphate (acyl-PO(4)) from acyl-[acyl-carrier-protein] (acyl-ACP). This enzyme utilizes acyl-ACP as fatty acyl donor, but not acyl-CoA. The chain is Phosphate acyltransferase from Thermotoga maritima (strain ATCC 43589 / DSM 3109 / JCM 10099 / NBRC 100826 / MSB8).